Here is a 144-residue protein sequence, read N- to C-terminus: Mannitol-specific phosphotransferase enzyme IIA component (144 aa).

Positions glutamate 3–alanine 142 constitute a PTS EIIA type-2 domain. Histidine 63 serves as the catalytic Tele-phosphohistidine intermediate. Position 63 is a phosphohistidine; by HPr (histidine 63).

As to quaternary structure, homodimer or homotrimer. Seems to be a monomer when not phosphorylated.

It is found in the cytoplasm. In terms of biological role, the phosphoenolpyruvate-dependent sugar phosphotransferase system (sugar PTS), a major carbohydrate active transport system, catalyzes the phosphorylation of incoming sugar substrates concomitantly with their translocation across the cell membrane. The enzyme II CmtAB PTS system is involved in D-mannitol transport. The polypeptide is Mannitol-specific phosphotransferase enzyme IIA component (mtlF) (Staphylococcus aureus (strain MRSA252)).